Consider the following 232-residue polypeptide: Clarin-1 (232 aa).

The chain crosses the membrane as a helical span at residues 8–28; that stretch reads IIFCMAGVFSFACALGVVTAL. The N-linked (GlcNAc...) asparagine glycan is linked to N48. Helical transmembrane passes span 101-121 and 135-155; these read IILFSMILVVLTMVGTAFFMY and LGLYLVSFISGSCGCLVMILF. N184 is a glycosylation site (N-linked (GlcNAc...) asparagine). The chain crosses the membrane as a helical span at residues 186–206; that stretch reads TTSFWVVFICFFVHFLNGLLI.

Belongs to the clarin family.

Its subcellular location is the cell membrane. May have a role in the excitatory ribbon synapse junctions between hair cells and cochlear ganglion cells and presumably also in analogous synapses within the retina. The sequence is that of Clarin-1 (Clrn1) from Rattus norvegicus (Rat).